A 422-amino-acid chain; its full sequence is Histidine--tRNA ligase (422 aa).

Belongs to the class-II aminoacyl-tRNA synthetase family. In terms of assembly, homodimer.

The protein localises to the cytoplasm. The enzyme catalyses tRNA(His) + L-histidine + ATP = L-histidyl-tRNA(His) + AMP + diphosphate + H(+). This Alcanivorax borkumensis (strain ATCC 700651 / DSM 11573 / NCIMB 13689 / SK2) protein is Histidine--tRNA ligase.